The primary structure comprises 295 residues: MAEEFGSIDLLGDEDFFFDFDPSIVIDSLPAEDFLQSSPDSWIGEIENQLMNDENHQEESFVELDQQSVSDFIADLLVDYPTSDSGSVDLAADKVLTVDSPAAADDSGKENSDLVVEKKSNDSGSEIHDDDDEEGDDDAVAKKRRRRVRNRDAAVRSRERKKEYVQDLEKKSKYLERECLRLGRMLECFVAENQSLRYCLQKGNGNNTTMMSKQESAVLLLESLLLGSLLWLLGVNFICLFPYMSHTKCCLLRPEPEKLVLNGLGSSSKPSYTGVSRRCKGSRPRMKYQILTLAA.

A disordered region spans residues 101-154 (PAAADDSGKENSDLVVEKKSNDSGSEIHDDDDEEGDDDAVAKKRRRRVRNRDAA). Positions 106–127 (DSGKENSDLVVEKKSNDSGSEI) are enriched in basic and acidic residues. A compositionally biased stretch (acidic residues) spans 128–138 (HDDDDEEGDDD). Residues 140–203 (VAKKRRRRVR…QSLRYCLQKG (64 aa)) enclose the bZIP domain. The basic motif stretch occupies residues 142–162 (KKRRRRVRNRDAAVRSRERKK). Residues 168–182 (LEKKSKYLERECLRL) are leucine-zipper. A helical membrane pass occupies residues 224–244 (LLLGSLLWLLGVNFICLFPYM).

The protein belongs to the bZIP family. Interacts with BZIP28. In terms of tissue distribution, expressed in seedlings, rosette and cauline leaves, stems, buds, flowers, siliques, immature seeds, anthers and pollen grains.

The protein localises to the endoplasmic reticulum membrane. It localises to the nucleus. Functionally, transcription factor involved in the unfolded protein response (UPR). Acts during endoplasmic reticulum stress (ER) by activating unfolded protein response (UPR) target genes via direct binding to the UPR element (UPRE). Plays a role in plant immunity and abiotic stress responses. The chain is bZIP transcription factor 60 from Arabidopsis thaliana (Mouse-ear cress).